We begin with the raw amino-acid sequence, 196 residues long: Peptidyl-tRNA hydrolase (196 aa).

TRNA is bound at residue Y17. The Proton acceptor role is filled by H22. 3 residues coordinate tRNA: F68, N70, and N116.

Belongs to the PTH family. Monomer.

It localises to the cytoplasm. The enzyme catalyses an N-acyl-L-alpha-aminoacyl-tRNA + H2O = an N-acyl-L-amino acid + a tRNA + H(+). Hydrolyzes ribosome-free peptidyl-tRNAs (with 1 or more amino acids incorporated), which drop off the ribosome during protein synthesis, or as a result of ribosome stalling. In terms of biological role, catalyzes the release of premature peptidyl moieties from peptidyl-tRNA molecules trapped in stalled 50S ribosomal subunits, and thus maintains levels of free tRNAs and 50S ribosomes. This is Peptidyl-tRNA hydrolase from Photorhabdus laumondii subsp. laumondii (strain DSM 15139 / CIP 105565 / TT01) (Photorhabdus luminescens subsp. laumondii).